A 346-amino-acid chain; its full sequence is DNA-directed RNA polymerases I and III subunit RPAC1 (346 aa).

Position 2 is an N-acetylalanine (Ala2).

Belongs to the archaeal Rpo3/eukaryotic RPB3 RNA polymerase subunit family. Component of the RNA polymerase I and RNA polymerase III complexes consisting of at least 13 and 17 subunits, respectively. Pol I complex consists of a ten-subunit catalytic core composed of POLR1A/RPA1, POLR1B/RPA2, POLR1C/RPAC1, POLR1D/RPAC2, POLR1H/RPA12, POLR2E/RPABC1, POLR2F/RPABC2, POLR2H/RPABC3, POLR2K/RPABC4 and POLR2L/RPABC5; a mobile stalk subunit POLR1F/RPA43 protruding from the core and additional subunits homologous to general transcription factors POLR1E/RPA49 and POLR1G/RPA34. Part of Pol I pre-initiation complex (PIC), in which Pol I core assembles with RRN3 and promoter-bound UTBF and SL1/TIF-IB complex. Pol III complex consists of a ten-subunit catalytic core composed of POLR3A/RPC1, POLR3B/RPC2, POLR1C/RPAC1, POLR1D/RPAC2, POLR3K/RPC10, POLR2E/RPABC1, POLR2F/RPABC2, POLR2H/RPABC3, POLR2K/RPABC4 and POLR2L/RPABC5; a mobile stalk composed of two subunits POLR3H/RPC8 and CRCP/RPC9, protruding from the core and functioning primarily in transcription initiation; and additional subunits homologous to general transcription factors of the RNA polymerase II machinery, POLR3C/RPC3-POLR3F/RPC6-POLR3G/RPC7 heterotrimer required for transcription initiation and POLR3D/RPC4-POLR3E/RPC5 heterodimer involved in both transcription initiation and termination.

Its subcellular location is the nucleus. It localises to the cytoplasm. It is found in the cytosol. In terms of biological role, DNA-dependent RNA polymerase catalyzes the transcription of DNA into RNA using the four ribonucleoside triphosphates as substrates. Common component of RNA polymerases I and III which synthesize ribosomal RNA precursors and short non-coding RNAs including 5S rRNA, snRNAs, tRNAs and miRNAs, respectively. POLR1C/RPAC1 is part of the polymerase core and may function as a clamp element that moves to open and close the cleft. This is DNA-directed RNA polymerases I and III subunit RPAC1 from Mus musculus (Mouse).